The sequence spans 629 residues: MAFEALTGVNGDLVTISWMASKGANQTEHYLKEEVGGTVFFAFRASFSSEDLFATENTSPFGEIKMKRNQFPCMRSIGNDVDTTVNEAFLKSLEVLIGPRTSFHASVQSAVDRKQQVVFTGHSFGGATAILATVWYLETYFIRDAYAAPEPRCVTFGAPLVGDYIFKHALGRENWSRFFVNFVTRFDIVPRIMLARKTTIEQTLSYVLGKLDSTRAPIHESDQVITEFYTRVMRDTYTVASKAVCQLIGNGEAFLETLSSFYELSPYRPVGTFVFSTQKRLVVVNNSDAILQMLFYTCQSNDEQELSVIPFLSIRDHHGYEELVQSIGIKLLNHLDLHNPLLDGENSIGSALDDLGMSTRARQCIHAALEAEKQRVENQKKIETKRDQIVERLTWIVEVYKPKCQAHKNGYYDSFKDSNEENDFKANVKRVELAGIFDEVLGLVKKGQLPDGFEGSRGWINLATQYRRLIEPLDISNYHGQLKNEDTGPYMLHGRPSRYKYAQRGYEHDILKPTGMIAKDVFWSKVNGLNLGLQQDIQEILKNSGSECGSCFWAEVEELKGKPYEEVQVRFKTLEGLLEGWIKDGEVDEKEIFLEGSTFRKWWNTLPDSHKIHAPLYPRERMMDETRAT.

Ser-123 serves as the catalytic Nucleophile. Catalysis depends on charge relay system residues Asp-187 and His-317.

Interacts (via N-terminus) with PAD4 and SAG101. Part of a nuclear complex made of EDS1, PAD4 and SAG101, that can be redirected to the cytoplasm in the presence of an extranuclear form of EDS1. Does not interact with itself or with EDS1.

It localises to the nucleus. It is found in the cytoplasm. Acts as a second functional copy of EDS1. Can mediate HRT-mediated resistance to turnip crinkle virus. The chain is Protein EDS1B (EDS1B) from Arabidopsis thaliana (Mouse-ear cress).